The primary structure comprises 330 residues: 1,8-cineole synthase (330 aa).

Position 81 (Asp81) interacts with Mg(2+). A DDXXD motif motif is present at residues 81–85 (DDHFD). Arg174 contacts substrate. Asn220 and Ser224 together coordinate Mg(2+). Residues 220–228 (NDVLSLEKE) carry the NXXXSXXXE motif motif. Residue Lys227 coordinates substrate. Position 228 (Glu228) interacts with Mg(2+). 314 to 315 (RY) provides a ligand contact to substrate.

This sequence belongs to the terpene synthase family. As to quaternary structure, homodimer. Mg(2+) is required as a cofactor.

The catalysed reaction is (2E)-geranyl diphosphate + H2O = 1,8-cineole + diphosphate. The enzyme catalyses neryl diphosphate + H2O = 1,8-cineole + diphosphate. Functionally, in vitro, catalyzes the formation of 1,8-cineole from geranyl diphosphate (GPP). Can also accept neryl diphosphate (NPP) as substrate to produce 1,8-cineole. This chain is 1,8-cineole synthase, found in Streptomyces clavuligerus.